The chain runs to 117 residues: Large ribosomal subunit protein bL19 (117 aa).

This sequence belongs to the bacterial ribosomal protein bL19 family.

Functionally, this protein is located at the 30S-50S ribosomal subunit interface and may play a role in the structure and function of the aminoacyl-tRNA binding site. The polypeptide is Large ribosomal subunit protein bL19 (Leptothrix cholodnii (strain ATCC 51168 / LMG 8142 / SP-6) (Leptothrix discophora (strain SP-6))).